Consider the following 335-residue polypeptide: Dihydroorotate dehydrogenase (quinone) (335 aa).

Residues 61 to 65 and threonine 85 contribute to the FMN site; that span reads AGLDK. Lysine 65 is a substrate binding site. Substrate is bound at residue 110–114; the sequence is NRMGF. 2 residues coordinate FMN: asparagine 138 and asparagine 171. Asparagine 171 contacts substrate. Serine 174 functions as the Nucleophile in the catalytic mechanism. Asparagine 176 contributes to the substrate binding site. FMN is bound by residues lysine 216 and threonine 244. 245–246 contacts substrate; sequence NT. FMN-binding positions include glycine 267, glycine 296, and 317 to 318; that span reads YS.

The protein belongs to the dihydroorotate dehydrogenase family. Type 2 subfamily. Monomer. Requires FMN as cofactor.

The protein resides in the cell membrane. The enzyme catalyses (S)-dihydroorotate + a quinone = orotate + a quinol. Its pathway is pyrimidine metabolism; UMP biosynthesis via de novo pathway; orotate from (S)-dihydroorotate (quinone route): step 1/1. Its function is as follows. Catalyzes the conversion of dihydroorotate to orotate with quinone as electron acceptor. The protein is Dihydroorotate dehydrogenase (quinone) of Pseudoalteromonas atlantica (strain T6c / ATCC BAA-1087).